A 788-amino-acid polypeptide reads, in one-letter code: Ciliated left-right organizer metallopeptidase (788 aa).

Residues 1–20 (MLLLLLLLLLLPPLVLRVAA) form the signal peptide. The Extracellular segment spans residues 21–735 (SRCLHDETQK…DHNPSMTHLR (715 aa)). Residues 40–56 (SQLPSKSRSSSLTLPSS) are compositionally biased toward low complexity. Residues 40–59 (SQLPSKSRSSSLTLPSSRDP) are disordered. A Zn(2+)-binding site is contributed by His305. Glu306 is an active-site residue. His309 provides a ligand contact to Zn(2+). N-linked (GlcNAc...) asparagine glycosylation occurs at Asn333. Position 385 (His385) interacts with Zn(2+). N-linked (GlcNAc...) asparagine glycans are attached at residues Asn425, Asn491, Asn524, and Asn713. The chain crosses the membrane as a helical span at residues 736–756 (LSMGLCLMLLILVGVMGTTAY). Residues 757–788 (QKRATLPVRPSASYHSPELHSTRVPVRGIREV) lie on the Cytoplasmic side of the membrane. The interval 767–788 (SASYHSPELHSTRVPVRGIREV) is disordered.

Belongs to the peptidase M8 family. Requires Zn(2+) as cofactor.

It is found in the membrane. Its function is as follows. Putative metalloproteinase that plays a role in left-right patterning process. The protein is Ciliated left-right organizer metallopeptidase of Homo sapiens (Human).